The sequence spans 338 residues: Lipoate-protein ligase A (338 aa).

In terms of domain architecture, BPL/LPL catalytic spans 29–216 (PATQRVLFLW…AFFAHYGERV (188 aa)). ATP contacts are provided by residues Arg-71, 76–79 (GAVF), and Lys-134. Lys-134 is a binding site for (R)-lipoate.

It belongs to the LplA family. Monomer.

It localises to the cytoplasm. The catalysed reaction is L-lysyl-[lipoyl-carrier protein] + (R)-lipoate + ATP = N(6)-[(R)-lipoyl]-L-lysyl-[lipoyl-carrier protein] + AMP + diphosphate + H(+). The protein operates within protein modification; protein lipoylation via exogenous pathway; protein N(6)-(lipoyl)lysine from lipoate: step 1/2. It participates in protein modification; protein lipoylation via exogenous pathway; protein N(6)-(lipoyl)lysine from lipoate: step 2/2. Its function is as follows. Catalyzes both the ATP-dependent activation of exogenously supplied lipoate to lipoyl-AMP and the transfer of the activated lipoyl onto the lipoyl domains of lipoate-dependent enzymes. This is Lipoate-protein ligase A from Escherichia coli O81 (strain ED1a).